The primary structure comprises 126 residues: Hydrogenase maturation factor HypA (126 aa).

Position 2 (His-2) interacts with Ni(2+). Residues Cys-78, Cys-81, Cys-97, and Cys-100 each contribute to the Zn(2+) site.

This sequence belongs to the HypA/HybF family.

Involved in the maturation of [NiFe] hydrogenases. Required for nickel insertion into the metal center of the hydrogenase. This chain is Hydrogenase maturation factor HypA, found in Methanococcus maripaludis (strain C5 / ATCC BAA-1333).